A 382-amino-acid chain; its full sequence is Homoserine O-acetyltransferase (382 aa).

Positions 1-20 (MSTDQSPCPSATGAELLPPP) are disordered. The AB hydrolase-1 domain maps to 59–363 (NVVLVEHALT…RDGHDGFLTE (305 aa)). S164 functions as the Nucleophile in the catalytic mechanism. R234 is a substrate binding site. Residues D327 and H357 contribute to the active site. D358 is a substrate binding site.

This sequence belongs to the AB hydrolase superfamily. MetX family. In terms of assembly, homodimer.

The protein resides in the cytoplasm. It catalyses the reaction L-homoserine + acetyl-CoA = O-acetyl-L-homoserine + CoA. The protein operates within amino-acid biosynthesis; L-methionine biosynthesis via de novo pathway; O-acetyl-L-homoserine from L-homoserine: step 1/1. Its function is as follows. Transfers an acetyl group from acetyl-CoA to L-homoserine, forming acetyl-L-homoserine. This is Homoserine O-acetyltransferase from Nocardia farcinica (strain IFM 10152).